The following is a 260-amino-acid chain: Zinc import ATP-binding protein ZnuC (260 aa).

The region spanning 14 to 229 (LTARNLCADR…PEFARLFGDQ (216 aa)) is the ABC transporter domain. 46 to 53 (GPNGAGKS) contacts ATP.

The protein belongs to the ABC transporter superfamily. Zinc importer (TC 3.A.1.15.5) family. As to quaternary structure, the complex is composed of two ATP-binding proteins (ZnuC), two transmembrane proteins (ZnuB) and a solute-binding protein (ZnuA).

The protein resides in the cell inner membrane. The enzyme catalyses Zn(2+)(out) + ATP(in) + H2O(in) = Zn(2+)(in) + ADP(in) + phosphate(in) + H(+)(in). Its function is as follows. Part of the ABC transporter complex ZnuABC involved in zinc import. Responsible for energy coupling to the transport system. The polypeptide is Zinc import ATP-binding protein ZnuC (Magnetococcus marinus (strain ATCC BAA-1437 / JCM 17883 / MC-1)).